Reading from the N-terminus, the 251-residue chain is Probable transcriptional regulatory protein BLA_1344 (251 aa).

The protein belongs to the TACO1 family.

It localises to the cytoplasm. This chain is Probable transcriptional regulatory protein BLA_1344, found in Bifidobacterium animalis subsp. lactis (strain AD011).